The following is a 316-amino-acid chain: Apolipoprotein E (316 aa).

Residues 1–18 (MKVLWVALVVALLAGCQA) form the signal peptide. 8 tandem repeats follow at residues 79–100 (VLMEETMKEVKAYREELEGQLA), 101–122 (PMAQETQARVSKELQAAQARLG), 123–144 (SDMEDLRNRLAQYRSEVQAMLG), 145–166 (QSTEELRARMASHLRKLRKRLL), 167–188 (RDADDLKKRLAVYQAGASEGAE), 189–210 (RSVSAIRERLRPLVEQGQSRAA), 211–232 (TLSTQAAQPLLDRAEAWRQKLH), and 233–254 (GRLEEVGVRAQDRLDKMRQQLE). Residues 79–254 (VLMEETMKEV…RLDKMRQQLE (176 aa)) form an 8 X 22 AA approximate tandem repeats region. Methionine sulfoxide is present on methionine 142. The residue at position 146 (serine 146) is a Phosphoserine. The segment at 157–167 (HLRKLRKRLLR) is LDL and other lipoprotein receptors binding. 161-164 (LRKR) provides a ligand contact to heparin. The lipid-binding and lipoprotein association stretch occupies residues 209-289 (AATLSTQAAQ…SWFEPLVGDM (81 aa)). O-linked (GalNAc...) threonine glycosylation occurs at threonine 211. 228–235 (RQKLHGRL) contributes to the heparin binding site. The interval 265 to 316 (SQIRLQAEAFQARLRSWFEPLVGDMQRQWAGLVEKVQLALHLSPTSPPSENH) is homooligomerization. Residues 277 to 289 (RLRSWFEPLVGDM) form a specificity for association with VLDL region.

It belongs to the apolipoprotein A1/A4/E family. In terms of assembly, homotetramer. May interact with ABCA1; functionally associated with ABCA1 in the biogenesis of HDLs. May interact with APP/A4 amyloid-beta peptide; the interaction is extremely stable in vitro but its physiological significance is unclear. May interact with MAPT. May interact with MAP2. In the cerebrospinal fluid, interacts with secreted SORL1. Interacts with PMEL; this allows the loading of PMEL luminal fragment on ILVs to induce fibril nucleation. In terms of processing, APOE exists as multiple glycosylated and sialylated glycoforms within cells and in plasma. The extent of glycosylation and sialylation are tissue and context specific. Glycated in plasma VLDL. Post-translationally, phosphorylated by FAM20C in the extracellular medium.

Its subcellular location is the secreted. It localises to the extracellular space. The protein resides in the extracellular matrix. It is found in the extracellular vesicle. The protein localises to the endosome. Its subcellular location is the multivesicular body. In terms of biological role, APOE is an apolipoprotein, a protein associating with lipid particles, that mainly functions in lipoprotein-mediated lipid transport between organs via the plasma and interstitial fluids. APOE is a core component of plasma lipoproteins and is involved in their production, conversion and clearance. Apolipoproteins are amphipathic molecules that interact both with lipids of the lipoprotein particle core and the aqueous environment of the plasma. As such, APOE associates with chylomicrons, chylomicron remnants, very low density lipoproteins (VLDL) and intermediate density lipoproteins (IDL) but shows a preferential binding to high-density lipoproteins (HDL). It also binds a wide range of cellular receptors including the LDL receptor/LDLR and the very low-density lipoprotein receptor/VLDLR that mediate the cellular uptake of the APOE-containing lipoprotein particles. Finally, APOE also has a heparin-binding activity and binds heparan-sulfate proteoglycans on the surface of cells, a property that supports the capture and the receptor-mediated uptake of APOE-containing lipoproteins by cells. This Capra hircus aegagrus (Wild goat) protein is Apolipoprotein E (APOE).